The sequence spans 362 residues: 3-dehydroquinate synthase (362 aa).

NAD(+)-binding positions include 71 to 76 (DGEQYK), 105 to 109 (GVIGD), 129 to 130 (TT), Lys-142, and Lys-151. Residues Glu-184, His-247, and His-264 each contribute to the Zn(2+) site.

Belongs to the sugar phosphate cyclases superfamily. Dehydroquinate synthase family. NAD(+) is required as a cofactor. The cofactor is Co(2+). Requires Zn(2+) as cofactor.

The protein localises to the cytoplasm. It catalyses the reaction 7-phospho-2-dehydro-3-deoxy-D-arabino-heptonate = 3-dehydroquinate + phosphate. Its pathway is metabolic intermediate biosynthesis; chorismate biosynthesis; chorismate from D-erythrose 4-phosphate and phosphoenolpyruvate: step 2/7. Functionally, catalyzes the conversion of 3-deoxy-D-arabino-heptulosonate 7-phosphate (DAHP) to dehydroquinate (DHQ). This is 3-dehydroquinate synthase from Haemophilus ducreyi (strain 35000HP / ATCC 700724).